Reading from the N-terminus, the 99-residue chain is Malonate decarboxylase acyl carrier protein (99 aa).

Ser25 is subject to O-(phosphoribosyl dephospho-coenzyme A)serine.

It belongs to the MdcC family. Covalently binds the prosthetic group of malonate decarboxylase.

The protein localises to the cytoplasm. Its function is as follows. Subunit of malonate decarboxylase, it is an acyl carrier protein to which acetyl and malonyl thioester residues are bound via a 2'-(5''-phosphoribosyl)-3'-dephospho-CoA prosthetic group and turn over during the catalytic mechanism. This Pseudomonas syringae pv. tomato (strain ATCC BAA-871 / DC3000) protein is Malonate decarboxylase acyl carrier protein.